A 105-amino-acid polypeptide reads, in one-letter code: Pyruvate synthase subunit PorD (105 aa).

2 consecutive 4Fe-4S ferredoxin-type domains span residues 44 to 73 (FKPE…LDEE) and 74 to 103 (GYPV…MVRE). [4Fe-4S] cluster-binding residues include cysteine 53, cysteine 56, cysteine 59, cysteine 63, cysteine 83, cysteine 86, cysteine 89, and cysteine 93.

Heterotetramer of one alpha, one beta, one delta and one gamma chain. The cofactor is [4Fe-4S] cluster.

In Pyrococcus furiosus (strain ATCC 43587 / DSM 3638 / JCM 8422 / Vc1), this protein is Pyruvate synthase subunit PorD (porD).